Here is a 29-residue protein sequence, read N- to C-terminus: Cytochrome c oxidase subunit 7A2, mitochondrial (29 aa).

Lys-10 is subject to N6-acetyllysine.

It belongs to the cytochrome c oxidase VIIa family. In terms of assembly, component of the cytochrome c oxidase (complex IV, CIV), a multisubunit enzyme composed of 14 subunits. The complex is composed of a catalytic core of 3 subunits MT-CO1, MT-CO2 and MT-CO3, encoded in the mitochondrial DNA, and 11 supernumerary subunits COX4I, COX5A, COX5B, COX6A, COX6B, COX6C, COX7A, COX7B, COX7C, COX8 and NDUFA4, which are encoded in the nuclear genome. The complex exists as a monomer or a dimer and forms supercomplexes (SCs) in the inner mitochondrial membrane with NADH-ubiquinone oxidoreductase (complex I, CI) and ubiquinol-cytochrome c oxidoreductase (cytochrome b-c1 complex, complex III, CIII), resulting in different assemblies (supercomplex SCI(1)III(2)IV(1) and megacomplex MCI(2)III(2)IV(2)). Interacts with PET100.

The protein localises to the mitochondrion inner membrane. The protein operates within energy metabolism; oxidative phosphorylation. Component of the cytochrome c oxidase, the last enzyme in the mitochondrial electron transport chain which drives oxidative phosphorylation. The respiratory chain contains 3 multisubunit complexes succinate dehydrogenase (complex II, CII), ubiquinol-cytochrome c oxidoreductase (cytochrome b-c1 complex, complex III, CIII) and cytochrome c oxidase (complex IV, CIV), that cooperate to transfer electrons derived from NADH and succinate to molecular oxygen, creating an electrochemical gradient over the inner membrane that drives transmembrane transport and the ATP synthase. Cytochrome c oxidase is the component of the respiratory chain that catalyzes the reduction of oxygen to water. Electrons originating from reduced cytochrome c in the intermembrane space (IMS) are transferred via the dinuclear copper A center (CU(A)) of subunit 2 and heme A of subunit 1 to the active site in subunit 1, a binuclear center (BNC) formed by heme A3 and copper B (CU(B)). The BNC reduces molecular oxygen to 2 water molecules using 4 electrons from cytochrome c in the IMS and 4 protons from the mitochondrial matrix. The sequence is that of Cytochrome c oxidase subunit 7A2, mitochondrial (COX7A2) from Canis lupus familiaris (Dog).